The primary structure comprises 383 residues: Succinate--CoA ligase [ADP-forming] subunit beta (383 aa).

Residues 9 to 236 (KELLGRFGLR…VEAADPQEHR (228 aa)) form the ATP-grasp domain. ATP contacts are provided by residues lysine 45, 52-54 (GRG), glutamate 91, alanine 94, and glutamate 99. Residues asparagine 191 and aspartate 205 each coordinate Mg(2+). Substrate is bound by residues asparagine 256 and 313–315 (GIT).

Belongs to the succinate/malate CoA ligase beta subunit family. Heterotetramer of two alpha and two beta subunits. Requires Mg(2+) as cofactor.

It carries out the reaction succinate + ATP + CoA = succinyl-CoA + ADP + phosphate. The catalysed reaction is GTP + succinate + CoA = succinyl-CoA + GDP + phosphate. The protein operates within carbohydrate metabolism; tricarboxylic acid cycle; succinate from succinyl-CoA (ligase route): step 1/1. In terms of biological role, succinyl-CoA synthetase functions in the citric acid cycle (TCA), coupling the hydrolysis of succinyl-CoA to the synthesis of either ATP or GTP and thus represents the only step of substrate-level phosphorylation in the TCA. The beta subunit provides nucleotide specificity of the enzyme and binds the substrate succinate, while the binding sites for coenzyme A and phosphate are found in the alpha subunit. This is Succinate--CoA ligase [ADP-forming] subunit beta from Rubrobacter xylanophilus (strain DSM 9941 / JCM 11954 / NBRC 16129 / PRD-1).